A 219-amino-acid chain; its full sequence is Ribose-5-phosphate isomerase A (219 aa).

Substrate contacts are provided by residues 28-31 (TGST), 81-84 (DGAD), and 94-97 (KGGG). Catalysis depends on Glu103, which acts as the Proton acceptor. Lys121 contacts substrate.

The protein belongs to the ribose 5-phosphate isomerase family. As to quaternary structure, homodimer.

The enzyme catalyses aldehydo-D-ribose 5-phosphate = D-ribulose 5-phosphate. It functions in the pathway carbohydrate degradation; pentose phosphate pathway; D-ribose 5-phosphate from D-ribulose 5-phosphate (non-oxidative stage): step 1/1. Functionally, catalyzes the reversible conversion of ribose-5-phosphate to ribulose 5-phosphate. In Shewanella pealeana (strain ATCC 700345 / ANG-SQ1), this protein is Ribose-5-phosphate isomerase A.